We begin with the raw amino-acid sequence, 326 residues long: Adenine deaminase (326 aa).

Residues His-14, His-16, and His-194 each contribute to the Zn(2+) site. Catalysis depends on Glu-197, which acts as the Proton donor. Asp-275 is a binding site for Zn(2+). Asp-276 contacts substrate.

This sequence belongs to the metallo-dependent hydrolases superfamily. Adenosine and AMP deaminases family. Adenine deaminase type 2 subfamily. Zn(2+) serves as cofactor.

The enzyme catalyses adenine + H2O + H(+) = hypoxanthine + NH4(+). Functionally, catalyzes the hydrolytic deamination of adenine to hypoxanthine. Plays an important role in the purine salvage pathway and in nitrogen catabolism. This chain is Adenine deaminase, found in Crocosphaera subtropica (strain ATCC 51142 / BH68) (Cyanothece sp. (strain ATCC 51142)).